The primary structure comprises 185 residues: Elongation factor P (185 aa).

The protein belongs to the elongation factor P family.

It localises to the cytoplasm. It functions in the pathway protein biosynthesis; polypeptide chain elongation. Functionally, involved in peptide bond synthesis. Stimulates efficient translation and peptide-bond synthesis on native or reconstituted 70S ribosomes in vitro. Probably functions indirectly by altering the affinity of the ribosome for aminoacyl-tRNA, thus increasing their reactivity as acceptors for peptidyl transferase. This Bordetella bronchiseptica (strain ATCC BAA-588 / NCTC 13252 / RB50) (Alcaligenes bronchisepticus) protein is Elongation factor P.